The chain runs to 61 residues: Small ribosomal subunit protein uS14 (61 aa).

4 residues coordinate Zn(2+): Cys24, Cys27, Cys40, and Cys43.

Belongs to the universal ribosomal protein uS14 family. Zinc-binding uS14 subfamily. Part of the 30S ribosomal subunit. Contacts proteins S3 and S10. Requires Zn(2+) as cofactor.

Its function is as follows. Binds 16S rRNA, required for the assembly of 30S particles and may also be responsible for determining the conformation of the 16S rRNA at the A site. This Brevibacillus brevis (strain 47 / JCM 6285 / NBRC 100599) protein is Small ribosomal subunit protein uS14.